Reading from the N-terminus, the 261-residue chain is Indole-3-glycerol phosphate synthase (261 aa).

It belongs to the TrpC family.

It catalyses the reaction 1-(2-carboxyphenylamino)-1-deoxy-D-ribulose 5-phosphate + H(+) = (1S,2R)-1-C-(indol-3-yl)glycerol 3-phosphate + CO2 + H2O. Its pathway is amino-acid biosynthesis; L-tryptophan biosynthesis; L-tryptophan from chorismate: step 4/5. In Burkholderia multivorans (strain ATCC 17616 / 249), this protein is Indole-3-glycerol phosphate synthase.